The sequence spans 502 residues: Maturase K (502 aa).

It belongs to the intron maturase 2 family. MatK subfamily.

Its subcellular location is the plastid. The protein localises to the chloroplast. Its function is as follows. Usually encoded in the trnK tRNA gene intron. Probably assists in splicing its own and other chloroplast group II introns. In Stanleya pinnata (Prince's plume), this protein is Maturase K.